A 176-amino-acid polypeptide reads, in one-letter code: Transcription termination/antitermination protein NusG (176 aa).

Positions 125–149 (GEVVRVVEGPFANFTATVEEYDVEH) constitute a KOW domain.

Belongs to the NusG family.

Its function is as follows. Participates in transcription elongation, termination and antitermination. The chain is Transcription termination/antitermination protein NusG from Helicobacter pylori (strain ATCC 700392 / 26695) (Campylobacter pylori).